Reading from the N-terminus, the 352-residue chain is Selenide, water dikinase (352 aa).

C21 is an active-site residue. ATP contacts are provided by residues K24 and 51-53 (TND). D54 serves as a coordination point for Mg(2+). Residues D71, D94, and 141 to 143 (GHS) contribute to the ATP site. D94 contacts Mg(2+). D231 lines the Mg(2+) pocket.

This sequence belongs to the selenophosphate synthase 1 family. Class I subfamily. As to quaternary structure, homodimer. Requires Mg(2+) as cofactor.

It carries out the reaction hydrogenselenide + ATP + H2O = selenophosphate + AMP + phosphate + 2 H(+). Synthesizes selenophosphate from selenide and ATP. The sequence is that of Selenide, water dikinase from Myxococcus xanthus (strain DK1622).